The primary structure comprises 1393 residues: DNA-directed RNA polymerase subunit beta' (1393 aa).

The Zn(2+) site is built by Cys72, Cys74, Cys87, and Cys90. Mg(2+)-binding residues include Asp463, Asp465, and Asp467. Zn(2+)-binding residues include Cys812, Cys887, Cys894, and Cys897.

Belongs to the RNA polymerase beta' chain family. The RNAP catalytic core consists of 2 alpha, 1 beta, 1 beta' and 1 omega subunit. When a sigma factor is associated with the core the holoenzyme is formed, which can initiate transcription. The cofactor is Mg(2+). Zn(2+) is required as a cofactor.

It catalyses the reaction RNA(n) + a ribonucleoside 5'-triphosphate = RNA(n+1) + diphosphate. Its function is as follows. DNA-dependent RNA polymerase catalyzes the transcription of DNA into RNA using the four ribonucleoside triphosphates as substrates. The chain is DNA-directed RNA polymerase subunit beta' from Chlamydia pneumoniae (Chlamydophila pneumoniae).